The primary structure comprises 339 residues: Anthranilate phosphoribosyltransferase (339 aa).

5-phospho-alpha-D-ribose 1-diphosphate contacts are provided by residues G79, 82-83 (GD), S87, 89-92 (NIST), 107-115 (KHGNRSISS), and S119. G79 contributes to the anthranilate binding site. S91 provides a ligand contact to Mg(2+). N110 provides a ligand contact to anthranilate. Anthranilate is bound at residue R165. Mg(2+) is bound by residues D224 and E225.

This sequence belongs to the anthranilate phosphoribosyltransferase family. In terms of assembly, homodimer. It depends on Mg(2+) as a cofactor.

It carries out the reaction N-(5-phospho-beta-D-ribosyl)anthranilate + diphosphate = 5-phospho-alpha-D-ribose 1-diphosphate + anthranilate. It participates in amino-acid biosynthesis; L-tryptophan biosynthesis; L-tryptophan from chorismate: step 2/5. In terms of biological role, catalyzes the transfer of the phosphoribosyl group of 5-phosphorylribose-1-pyrophosphate (PRPP) to anthranilate to yield N-(5'-phosphoribosyl)-anthranilate (PRA). This chain is Anthranilate phosphoribosyltransferase, found in Listeria innocua serovar 6a (strain ATCC BAA-680 / CLIP 11262).